A 369-amino-acid chain; its full sequence is 4-hydroxy-3-methylbut-2-en-1-yl diphosphate synthase (flavodoxin) (369 aa).

Residues Cys-270, Cys-273, Cys-305, and Glu-312 each contribute to the [4Fe-4S] cluster site.

This sequence belongs to the IspG family. It depends on [4Fe-4S] cluster as a cofactor.

The catalysed reaction is (2E)-4-hydroxy-3-methylbut-2-enyl diphosphate + oxidized [flavodoxin] + H2O + 2 H(+) = 2-C-methyl-D-erythritol 2,4-cyclic diphosphate + reduced [flavodoxin]. Its pathway is isoprenoid biosynthesis; isopentenyl diphosphate biosynthesis via DXP pathway; isopentenyl diphosphate from 1-deoxy-D-xylulose 5-phosphate: step 5/6. In terms of biological role, converts 2C-methyl-D-erythritol 2,4-cyclodiphosphate (ME-2,4cPP) into 1-hydroxy-2-methyl-2-(E)-butenyl 4-diphosphate. This chain is 4-hydroxy-3-methylbut-2-en-1-yl diphosphate synthase (flavodoxin), found in Pseudomonas fluorescens (strain SBW25).